The primary structure comprises 451 residues: Serine--tRNA ligase, cytoplasmic (451 aa).

A disulfide bridge connects residues cysteine 213 and cysteine 244. Position 238–240 (238–240 (TAE)) interacts with L-serine. Residues 269-271 (RKE) and valine 285 contribute to the ATP site. Glutamate 292 contributes to the L-serine binding site. 358 to 361 (ELVS) is a binding site for ATP. Threonine 396 provides a ligand contact to L-serine.

Belongs to the class-II aminoacyl-tRNA synthetase family. Type-1 seryl-tRNA synthetase subfamily. In terms of assembly, homodimer. The tRNA molecule binds across the dimer.

The protein resides in the cytoplasm. It is found in the cytosol. It carries out the reaction tRNA(Ser) + L-serine + ATP = L-seryl-tRNA(Ser) + AMP + diphosphate + H(+). In terms of biological role, catalyzes the attachment of serine to tRNA(Ser) in a two-step reaction: serine is first activated by ATP to form Ser-AMP and then transferred to the acceptor end of tRNA(Ser). The polypeptide is Serine--tRNA ligase, cytoplasmic (Arabidopsis thaliana (Mouse-ear cress)).